The sequence spans 580 residues: MTDTFSFNVNSDDLQKRSDHIKMGIHQAPARSLLYATGQVSNPEDMKKPFIAICNSYVEIIPGHVHLRELADVAKQAIRDAGGIPFEFNTIGVDDGIAMGHLGMRYSLPSRELIADSAETVITAHWFDGVFFLPNCDKITPGMIMASLRCNVPSVFVSGGPMKAGLDPQGKATTLSSMFEAVGAFKSGLMTEEEFLEMEQNACPTCGSCAGMFTANSMNTLMEVMGIALPFNGTALAISDERRDLIRDGAKQLMRMVKENVKPRDLITKEALDDAMALDMAMGGSTNTVLHVLSIAHEAGIDYDQADINEIAKKVPYLSKIAPSSKWAMEDVHNAGGVPAIINELIRMGDVLHPDRMTVTGKTLRENVADHEIINDEIIRKFDVNPYSKQGGLSILYGNLAPKGSVIKAGGVDPSIKDFTGEAIVFNSEQEAVEAIDSGQIHAGHVLIIRYEGPKGGPGMPEMLGPTSAITGMGLGKEVALVTDGRFSGASRGISVGHVSPEAADDGPIALVENGDKITIDLVNRTMHLHVDDTELAERHEHLKPFVPKMRNGWMARYQALVTSANTGGVLKGADELFPS.

A Mg(2+)-binding site is contributed by Asp-95. Cys-136 lines the [2Fe-2S] cluster pocket. Residues Asp-137 and Lys-138 each contribute to the Mg(2+) site. Lys-138 carries the N6-carboxylysine modification. Cys-209 serves as a coordination point for [2Fe-2S] cluster. Position 462 (Glu-462) interacts with Mg(2+). The active-site Proton acceptor is Ser-488.

Belongs to the IlvD/Edd family. In terms of assembly, homodimer. Requires [2Fe-2S] cluster as cofactor. It depends on Mg(2+) as a cofactor.

The enzyme catalyses (2R)-2,3-dihydroxy-3-methylbutanoate = 3-methyl-2-oxobutanoate + H2O. It catalyses the reaction (2R,3R)-2,3-dihydroxy-3-methylpentanoate = (S)-3-methyl-2-oxopentanoate + H2O. Its pathway is amino-acid biosynthesis; L-isoleucine biosynthesis; L-isoleucine from 2-oxobutanoate: step 3/4. It functions in the pathway amino-acid biosynthesis; L-valine biosynthesis; L-valine from pyruvate: step 3/4. Its function is as follows. Functions in the biosynthesis of branched-chain amino acids. Catalyzes the dehydration of (2R,3R)-2,3-dihydroxy-3-methylpentanoate (2,3-dihydroxy-3-methylvalerate) into 2-oxo-3-methylpentanoate (2-oxo-3-methylvalerate) and of (2R)-2,3-dihydroxy-3-methylbutanoate (2,3-dihydroxyisovalerate) into 2-oxo-3-methylbutanoate (2-oxoisovalerate), the penultimate precursor to L-isoleucine and L-valine, respectively. The polypeptide is Dihydroxy-acid dehydratase (Leuconostoc mesenteroides subsp. mesenteroides (strain ATCC 8293 / DSM 20343 / BCRC 11652 / CCM 1803 / JCM 6124 / NCDO 523 / NBRC 100496 / NCIMB 8023 / NCTC 12954 / NRRL B-1118 / 37Y)).